A 141-amino-acid chain; its full sequence is Galactose-6-phosphate isomerase subunit LacA (141 aa).

It belongs to the LacAB/RpiB family. In terms of assembly, heteromultimeric protein consisting of LacA and LacB.

The enzyme catalyses aldehydo-D-galactose 6-phosphate = keto-D-tagatose 6-phosphate. It participates in carbohydrate metabolism; D-galactose 6-phosphate degradation; D-tagatose 6-phosphate from D-galactose 6-phosphate: step 1/1. In Streptococcus pneumoniae serotype 4 (strain ATCC BAA-334 / TIGR4), this protein is Galactose-6-phosphate isomerase subunit LacA.